The following is a 337-amino-acid chain: Basic membrane protein A1 (337 aa).

A signal peptide spans 1-17; it reads MNKLLLLILFECIIFLS. Residue Cys18 is the site of N-palmitoyl cysteine attachment. Cys18 carries the S-diacylglycerol cysteine lipid modification.

The protein belongs to the BMP lipoprotein family. As to quaternary structure, monomer.

Its subcellular location is the cell inner membrane. Immunogenic protein. May be part of an ABC-type nucleoside uptake system involved in the purine salvage pathway. The protein is Basic membrane protein A1 (bmpA1) of Borrelia garinii subsp. bavariensis (strain ATCC BAA-2496 / DSM 23469 / PBi) (Borreliella bavariensis).